The chain runs to 155 residues: MRSGVRLGIDVGTVRIGVSCSDLHGTLATPYETVARSGDAADRRRIAEIVTDLGVVEIIVGLPLALSGVHTASTADAVAFAEALVVEVGAPVRLVDERLSTVSAHSALRSSGKNAKSSRPVVDQAAATIILQHALDAERATSRPPGHPVEPRIGP.

Positions 136-155 are disordered; it reads DAERATSRPPGHPVEPRIGP.

The protein belongs to the YqgF nuclease family.

The protein resides in the cytoplasm. Could be a nuclease involved in processing of the 5'-end of pre-16S rRNA. The protein is Putative pre-16S rRNA nuclease of Leifsonia xyli subsp. xyli (strain CTCB07).